The following is a 97-amino-acid chain: NADH dehydrogenase [ubiquinone] 1 alpha subcomplex subunit 2 (97 aa).

An intrachain disulfide couples C19 to C53.

Belongs to the complex I NDUFA2 subunit family. As to quaternary structure, complex I is composed of at least 49 different subunits.

It is found in the mitochondrion inner membrane. In terms of biological role, accessory subunit of the mitochondrial membrane respiratory chain NADH dehydrogenase (Complex I), that is believed not to be involved in catalysis. Complex I functions in the transfer of electrons from NADH to the respiratory chain. The immediate electron acceptor for the enzyme is believed to be ubiquinone. In Arabidopsis thaliana (Mouse-ear cress), this protein is NADH dehydrogenase [ubiquinone] 1 alpha subcomplex subunit 2.